The sequence spans 86 residues: Envelope glycoprotein N (86 aa).

The signal sequence occupies residues 1–29 (MTLYKIVSKPIILLAFFFTRVVFTNEVDG). Residues 30 to 47 (EELFYKPTCHSDTYEIIL) lie on the Virion surface side of the membrane. A helical membrane pass occupies residues 48–68 (KKFSSIWILVNTFILLCSFSL). Topologically, residues 69 to 86 (FLKYWCFKTLAKETVKGY) are intravirion.

The protein belongs to the herpesviridae glycoprotein N family. Interacts (via N-terminus) with gM (via N-terminus). The gM-gN heterodimer forms the gCII complex.

Its subcellular location is the virion membrane. It is found in the host membrane. The protein localises to the host Golgi apparatus. It localises to the host trans-Golgi network. In terms of biological role, envelope glycoprotein necessary for proper maturation of gM and modulation of its membrane fusion activity. Also plays a critical role in virion morphogenesis. This Homo sapiens (Human) protein is Envelope glycoprotein N.